The following is a 150-amino-acid chain: Glycophorin-A (150 aa).

The signal sequence occupies residues 1 to 19 (MYGKIIFVLLLSEIVSISA). Residues 20 to 91 (LSTTEVAMHT…QLAHHFSEPE (72 aa)) lie on the Extracellular side of the membrane. Ser-21 carries an O-linked (GalNAc...) serine glycan. 3 O-linked (GalNAc...) threonine glycosylation sites follow: Thr-22, Thr-23, and Thr-29. An O-linked (GalNAc...) serine glycan is attached at Ser-30. Residue Thr-31 is glycosylated (O-linked (GalNAc...) threonine). An O-linked (GalNAc...) serine glycan is attached at Ser-32. Thr-36 is a glycosylation site (O-linked (GalNAc...) threonine). O-linked (GalNAc...) serine glycans are attached at residues Ser-38 and Ser-41. O-linked (GalNAc...) threonine glycosylation is present at Thr-44. A glycan (N-linked (GlcNAc...) asparagine) is linked at Asn-45. O-linked (GalNAc...) threonine glycosylation is found at Thr-52 and Thr-56. 2 O-linked (GalNAc...) serine glycosylation sites follow: Ser-63 and Ser-66. O-linked (GalNAc...) threonine glycosylation is present at Thr-69. A helical membrane pass occupies residues 92–114 (ITLIIFGVMAGVIGTILLISYGI). Over 115–150 (RRLIKKSPSDVKPLPSPDTDVPLSSVEIENPETSDQ) the chain is Cytoplasmic. The disordered stretch occupies residues 121–150 (SPSDVKPLPSPDTDVPLSSVEIENPETSDQ). The residue at position 133 (Thr-133) is a Phosphothreonine. A phosphoserine mark is found at Ser-138 and Ser-148.

It belongs to the glycophorin A family. As to quaternary structure, homodimer. Component of the ankyrin-1 complex in the erythrocyte, composed of ANK1, RHCE, RHAG, SLC4A1, EPB42, GYPA, GYPB and AQP1. Interacts with SLC4A1; a GYPA monomer is bound at each end of the SLC4A1 dimer forming a heterotetramer. In terms of assembly, (Microbial infection) Interacts with Streptococcus gordonii hsa protein. (Microbial infection) Interacts (in a sialic acid-independent manner) with P.falciparum MSP1 subunit p83. Post-translationally, the major O-linked glycan are NeuAc-alpha-(2-3)-Gal-beta-(1-3)-[NeuAc-alpha-(2-6)]-GalNAcOH (about 78 %) and NeuAc-alpha-(2-3)-Gal-beta-(1-3)-GalNAcOH (17 %). Minor O-glycans (5 %) include NeuAc-alpha-(2-3)-Gal-beta-(1-3)-[NeuAc-alpha-(2-6)]-GalNAcOH NeuAc-alpha-(2-8)-NeuAc-alpha-(2-3)-Gal-beta-(1-3)-GalNAcOH. About 1% of all O-linked glycans carry blood group A, B and H determinants. They derive from a type-2 precursor core structure, Gal-beta-(1,3)-GlcNAc-beta-1-R, and the antigens are synthesized by addition of fucose (H antigen-specific) and then N-acetylgalactosamine (A antigen-specific) or galactose (B antigen-specific). Specifically O-linked-glycans are NeuAc-alpha-(2-3)-Gal-beta-(1-3)-GalNAcOH-(6-1)-GlcNAc-beta-(4-1)-[Fuc-alpha-(1-2)]-Gal-beta-(3-1)-GalNAc-alpha (about 1%, B antigen-specific) and NeuAc-alpha-(2-3)-Gal-beta-(1-3)-GalNAcOH-(6-1)-GlcNAc-beta-(4-1)-[Fuc-alpha-(1-2)]-Gal-beta (1 %, O antigen-, A antigen- and B antigen-specific).

The protein localises to the cell membrane. Functionally, component of the ankyrin-1 complex, a multiprotein complex involved in the stability and shape of the erythrocyte membrane. Glycophorin A is the major intrinsic membrane protein of the erythrocyte. The N-terminal glycosylated segment, which lies outside the erythrocyte membrane, has MN blood group receptors. Appears to be important for the function of SLC4A1 and is required for high activity of SLC4A1. May be involved in translocation of SLC4A1 to the plasma membrane. Its function is as follows. (Microbial infection) Appears to be a receptor for Hepatitis A virus (HAV). In terms of biological role, (Microbial infection) Receptor for P.falciparum erythrocyte-binding antigen 175 (EBA-175); binding of EBA-175 is dependent on sialic acid residues of the O-linked glycans. The sequence is that of Glycophorin-A from Homo sapiens (Human).